We begin with the raw amino-acid sequence, 447 residues long: N-succinylarginine dihydrolase (447 aa).

Substrate-binding positions include 19–28, asparagine 110, and 137–138; these read AGLSFGNEAS and HR. Glutamate 174 is a catalytic residue. Arginine 212 is a substrate binding site. The active site involves histidine 248. Substrate-binding residues include aspartate 250 and asparagine 359. Cysteine 365 serves as the catalytic Nucleophile.

Belongs to the succinylarginine dihydrolase family. Homodimer.

It carries out the reaction N(2)-succinyl-L-arginine + 2 H2O + 2 H(+) = N(2)-succinyl-L-ornithine + 2 NH4(+) + CO2. Its pathway is amino-acid degradation; L-arginine degradation via AST pathway; L-glutamate and succinate from L-arginine: step 2/5. Catalyzes the hydrolysis of N(2)-succinylarginine into N(2)-succinylornithine, ammonia and CO(2). The chain is N-succinylarginine dihydrolase from Escherichia coli O8 (strain IAI1).